The following is a 90-amino-acid chain: Guanine nucleotide-binding protein subunit gamma (90 aa).

Residue Cys-86 is the site of S-palmitoyl cysteine attachment. Cys-87 is modified (cysteine methyl ester). A lipid anchor (S-farnesyl cysteine) is attached at Cys-87. The propeptide at 88–90 (TIM) is removed in mature form.

This sequence belongs to the G protein gamma family. In terms of assembly, g proteins are composed of 3 units, alpha, beta and gamma.

It localises to the membrane. This chain is Guanine nucleotide-binding protein subunit gamma, found in Kluyveromyces lactis (strain ATCC 8585 / CBS 2359 / DSM 70799 / NBRC 1267 / NRRL Y-1140 / WM37) (Yeast).